Here is a 241-residue protein sequence, read N- to C-terminus: 1-(5-phosphoribosyl)-5-[(5-phosphoribosylamino)methylideneamino] imidazole-4-carboxamide isomerase (241 aa).

Asp-10 acts as the Proton acceptor in catalysis. The active-site Proton donor is the Asp-129.

Belongs to the HisA/HisF family.

The protein resides in the cytoplasm. The enzyme catalyses 1-(5-phospho-beta-D-ribosyl)-5-[(5-phospho-beta-D-ribosylamino)methylideneamino]imidazole-4-carboxamide = 5-[(5-phospho-1-deoxy-D-ribulos-1-ylimino)methylamino]-1-(5-phospho-beta-D-ribosyl)imidazole-4-carboxamide. It functions in the pathway amino-acid biosynthesis; L-histidine biosynthesis; L-histidine from 5-phospho-alpha-D-ribose 1-diphosphate: step 4/9. This chain is 1-(5-phosphoribosyl)-5-[(5-phosphoribosylamino)methylideneamino] imidazole-4-carboxamide isomerase, found in Salinispora arenicola (strain CNS-205).